The chain runs to 245 residues: Anti-Pycsar protein Apyc1 (245 aa).

The segment at 19 to 219 (FNNNALLYAG…EIQSQILLKH (201 aa)) is beta-lactamase-like. The Zn(2+) site is built by His61, His63, Asp65, His66, His145, Asp165, and His219.

The protein belongs to the anti-Pycsar protein Apyc1 family. In terms of assembly, homodimer. Requires Zn(2+) as cofactor.

It carries out the reaction 3',5'-cyclic CMP + H2O = CMP + H(+). The enzyme catalyses 3',5'-cyclic UMP + H2O = UMP + H(+). Its function is as follows. Counteracts the endogenous Pycsar antiviral defense system. Phosphodiesterase that enables metal-dependent hydrolysis of host cyclic nucleotide Pycsar defense signals such as cCMP and cUMP. The polypeptide is Anti-Pycsar protein Apyc1 (Paenibacillus sp. (strain J14)).